A 225-amino-acid polypeptide reads, in one-letter code: Ribonuclease 3 (225 aa).

The 123-residue stretch at 7–129 (IPRLCRTLGY…IIGAVYLDSD (123 aa)) folds into the RNase III domain. Glutamate 42 contacts Mg(2+). Residue aspartate 46 is part of the active site. Aspartate 115 and glutamate 118 together coordinate Mg(2+). Residue glutamate 118 is part of the active site. In terms of domain architecture, DRBM spans 155-225 (DPKTLLQELL…AAQALELIKR (71 aa)).

Belongs to the ribonuclease III family. As to quaternary structure, homodimer. It depends on Mg(2+) as a cofactor.

The protein localises to the cytoplasm. The enzyme catalyses Endonucleolytic cleavage to 5'-phosphomonoester.. Digests double-stranded RNA. Involved in the processing of primary rRNA transcript to yield the immediate precursors to the large and small rRNAs (23S and 16S). Processes some mRNAs, and tRNAs when they are encoded in the rRNA operon. Processes pre-crRNA and tracrRNA of type II CRISPR loci if present in the organism. This Shewanella woodyi (strain ATCC 51908 / MS32) protein is Ribonuclease 3.